The chain runs to 279 residues: 3-methyl-2-oxobutanoate hydroxymethyltransferase (279 aa).

Asp53 and Asp92 together coordinate Mg(2+). 3-methyl-2-oxobutanoate contacts are provided by residues 53-54 (DS), Asp92, and Lys122. Residue Glu124 coordinates Mg(2+). Glu191 serves as the catalytic Proton acceptor.

This sequence belongs to the PanB family. Homodecamer; pentamer of dimers. It depends on Mg(2+) as a cofactor.

It is found in the cytoplasm. It catalyses the reaction 3-methyl-2-oxobutanoate + (6R)-5,10-methylene-5,6,7,8-tetrahydrofolate + H2O = 2-dehydropantoate + (6S)-5,6,7,8-tetrahydrofolate. It functions in the pathway cofactor biosynthesis; (R)-pantothenate biosynthesis; (R)-pantoate from 3-methyl-2-oxobutanoate: step 1/2. In terms of biological role, catalyzes the reversible reaction in which hydroxymethyl group from 5,10-methylenetetrahydrofolate is transferred onto alpha-ketoisovalerate to form ketopantoate. This chain is 3-methyl-2-oxobutanoate hydroxymethyltransferase, found in Maricaulis maris (strain MCS10) (Caulobacter maris).